A 261-amino-acid chain; its full sequence is Indole-3-glycerol phosphate synthase (261 aa).

This sequence belongs to the TrpC family.

The enzyme catalyses 1-(2-carboxyphenylamino)-1-deoxy-D-ribulose 5-phosphate + H(+) = (1S,2R)-1-C-(indol-3-yl)glycerol 3-phosphate + CO2 + H2O. It functions in the pathway amino-acid biosynthesis; L-tryptophan biosynthesis; L-tryptophan from chorismate: step 4/5. This Burkholderia cenocepacia (strain HI2424) protein is Indole-3-glycerol phosphate synthase.